A 274-amino-acid chain; its full sequence is 2,3,4,5-tetrahydropyridine-2,6-dicarboxylate N-succinyltransferase (274 aa).

Substrate-binding residues include R104 and D141.

This sequence belongs to the transferase hexapeptide repeat family. Homotrimer.

It localises to the cytoplasm. It catalyses the reaction (S)-2,3,4,5-tetrahydrodipicolinate + succinyl-CoA + H2O = (S)-2-succinylamino-6-oxoheptanedioate + CoA. It participates in amino-acid biosynthesis; L-lysine biosynthesis via DAP pathway; LL-2,6-diaminopimelate from (S)-tetrahydrodipicolinate (succinylase route): step 1/3. This chain is 2,3,4,5-tetrahydropyridine-2,6-dicarboxylate N-succinyltransferase, found in Shewanella amazonensis (strain ATCC BAA-1098 / SB2B).